Here is a 211-residue protein sequence, read N- to C-terminus: LexA repressor (211 aa).

Residues 29-49 (VREICTAVGLRSTSTVHSHLN) constitute a DNA-binding region (H-T-H motif). Active-site for autocatalytic cleavage activity residues include S131 and K169.

This sequence belongs to the peptidase S24 family. In terms of assembly, homodimer.

It carries out the reaction Hydrolysis of Ala-|-Gly bond in repressor LexA.. Represses a number of genes involved in the response to DNA damage (SOS response), including recA and lexA. In the presence of single-stranded DNA, RecA interacts with LexA causing an autocatalytic cleavage which disrupts the DNA-binding part of LexA, leading to derepression of the SOS regulon and eventually DNA repair. This Clostridioides difficile (strain 630) (Peptoclostridium difficile) protein is LexA repressor.